Reading from the N-terminus, the 497-residue chain is Chlorophyllide reductase 52.5 kDa chain (497 aa).

The next 3 membrane-spanning stretches (helical) occupy residues 65 to 82 (VATV…LSFI), 126 to 142 (AIVV…GVPL), and 216 to 233 (MVIG…GPTV).

This sequence belongs to the BchN/ChlN family. As to quaternary structure, chlorophyllide reductase is composed of three subunits; BchX, BchY and BchZ. Forms a heterodimer of one BchY and one BchZ subunit.

The protein resides in the cell membrane. It carries out the reaction 3-deacetyl-3-vinylbacteriochlorophyllide a + 2 oxidized [2Fe-2S]-[ferredoxin] + ADP + phosphate = chlorophyllide a + 2 reduced [2Fe-2S]-[ferredoxin] + ATP + H2O + H(+). The enzyme catalyses bacteriochlorophyllide a + 2 oxidized [2Fe-2S]-[ferredoxin] + ADP + phosphate = 3-acetyl-3-devinylchlorophyllide a + 2 reduced [2Fe-2S]-[ferredoxin] + ATP + H2O + H(+). It catalyses the reaction 3-deacetyl-3-(1-hydroxyethyl)bacteriochlorophyllide a + 2 oxidized [2Fe-2S]-[ferredoxin] + ADP + phosphate = 3-devinyl-3-(1-hydroxyethyl)chlorophyllide a + 2 reduced [2Fe-2S]-[ferredoxin] + ATP + H2O + H(+). It participates in porphyrin-containing compound metabolism; bacteriochlorophyll biosynthesis (light-independent). Functionally, converts chlorophylls (Chl) into bacteriochlorophylls (BChl) by reducing ring B of the tetrapyrrole. This chain is Chlorophyllide reductase 52.5 kDa chain (bchY), found in Rhodobacter capsulatus (strain ATCC BAA-309 / NBRC 16581 / SB1003).